Here is a 387-residue protein sequence, read N- to C-terminus: Double C2-like domain-containing protein gamma (387 aa).

C2 domains are found at residues 83–209 (ALGT…DICL) and 243–376 (ERGR…ELWH). Positions 274, 280, 334, 336, and 342 each coordinate Ca(2+).

Ca(2+) serves as cofactor.

Functionally, may be involved in regulation of vesicular trafficking. In vitro, does not bind calcium and phospholipids. In Mus musculus (Mouse), this protein is Double C2-like domain-containing protein gamma (Doc2g).